Reading from the N-terminus, the 382-residue chain is Anhydro-N-acetylmuramic acid kinase (382 aa).

9–16 provides a ligand contact to ATP; that stretch reads GTSLDGID.

Belongs to the anhydro-N-acetylmuramic acid kinase family.

The catalysed reaction is 1,6-anhydro-N-acetyl-beta-muramate + ATP + H2O = N-acetyl-D-muramate 6-phosphate + ADP + H(+). It functions in the pathway amino-sugar metabolism; 1,6-anhydro-N-acetylmuramate degradation. The protein operates within cell wall biogenesis; peptidoglycan recycling. In terms of biological role, catalyzes the specific phosphorylation of 1,6-anhydro-N-acetylmuramic acid (anhMurNAc) with the simultaneous cleavage of the 1,6-anhydro ring, generating MurNAc-6-P. Is required for the utilization of anhMurNAc either imported from the medium or derived from its own cell wall murein, and thus plays a role in cell wall recycling. This chain is Anhydro-N-acetylmuramic acid kinase, found in Bacillus thuringiensis subsp. konkukian (strain 97-27).